A 278-amino-acid chain; its full sequence is Dehydrogenase/reductase SDR family member 4 (278 aa).

36–60 serves as a coordination point for NADP(+); the sequence is LVTASTDGIGFAIARRLAQDGAHVV. Lysine 92 is modified (N6-acetyllysine; alternate). Position 92 is an N6-succinyllysine; alternate (lysine 92). Lysine 105 is modified (N6-acetyllysine). Isoleucine 140 is modified (phosphoserine). Serine 169 is a substrate binding site. The active-site Proton acceptor is tyrosine 182. NADP(+) is bound at residue lysine 186. N6-acetyllysine; alternate is present on lysine 216. Lysine 216 is modified (N6-succinyllysine; alternate). Serine 220 is subject to Phosphoserine. An N6-succinyllysine mark is found at lysine 227 and lysine 234. Positions 276–278 match the Peroxisomal targeting signal motif; sequence SRL.

Belongs to the short-chain dehydrogenases/reductases (SDR) family. Homotetramer. In terms of tissue distribution, predominantly expressed in normal cervix (at protein level). Expressed in some neoplastic cervical tissues, but not in normal cervix (at protein level). As to expression, expressed in a few neoplastic cervical tissues. In terms of tissue distribution, high expression in liver.

Its subcellular location is the peroxisome. The protein resides in the nucleus. The enzyme catalyses a secondary alcohol + NADP(+) = a ketone + NADPH + H(+). It carries out the reaction 3beta-hydroxy-5beta-pregnane-20-one + NADP(+) = 5beta-pregnan-3,20-dione + NADPH + H(+). The catalysed reaction is 5beta-dihydrotestosterone + NADPH + H(+) = 5beta-androstane-3beta,17beta-diol + NADP(+). It catalyses the reaction 5beta-androstane-3,17-dione + NADPH + H(+) = 3beta-hydroxy-5beta-androstane-17-one + NADP(+). The enzyme catalyses isatin + NADPH + H(+) = 3-hydroxyindolin-2-one + NADP(+). It carries out the reaction lithocholate + NADP(+) = 3-oxo-5beta-cholan-24-oate + NADPH + H(+). The catalysed reaction is 3-oxo-5beta-cholan-24-oate + NADPH + H(+) = isolithocholate + NADP(+). Its activity is regulated as follows. Inhibited by flavonoids (quercetin and genistein), cetylpyridium chloride, phenylhexane and valproic acid. Low inhibition is observed with fatty acids (myristic acid and lauric acid). No significant inhibition is observed with barbital, dicumarol, indomethacin, metyrapone, ethacrynic acid, disulfiram, hexestrol and benzodiazepines (diazepam and nitrazepam). NADPH-dependent oxidoreductase which catalyzes the reduction of a variety of compounds bearing carbonyl groups including ketosteroids, alpha-dicarbonyl compounds, aldehydes, aromatic ketones and quinones. Reduces 3-ketosteroids and benzil into 3beta-hydroxysteroids and R-benzoin, respectively, in contrast to the stereoselectivity of non-primate DHRS4s which produce 3alpha-hydroxysteroids and S-benzoin. Diplays low activity toward all-trans-retinal and no activity toward 9-cis-retinal as compared to non-primate mammals. In the reverse reaction, catalyze the NAD-dependent oxidation of 3beta-hydroxysteroids and alcohol, but with much lower efficiency. Involved in the metabolism of 3beta-hydroxysteroids, isatin and xenobiotic carbonyl compounds. In terms of biological role, no detected catalytic activity in vitro, possibly due to the lack of catalytic site. Functionally, NADPH-dependent oxidoreductase which catalyzes the reduction of a variety of compounds bearing carbonyl groups including ketosteroids, alpha-dicarbonyl compounds, aldehydes, aromatic ketones and quinones. Involved in the metabolism of 3beta-hydroxysteroids, isatin and xenobiotic carbonyl compounds. Has a higher catalytic activity for xenobiotic alpha-dicarbonyl compounds, sucha as benzil, than isoform 1 and is involved in benzil detoxification. The polypeptide is Dehydrogenase/reductase SDR family member 4 (Homo sapiens (Human)).